We begin with the raw amino-acid sequence, 457 residues long: Bifunctional protein GlmU (457 aa).

A pyrophosphorylase region spans residues 1–232 (MAKVAAIVLA…PMEVMGVNDR (232 aa)). Residues 9 to 12 (LAAG), K23, Q75, and 80 to 81 (GT) each bind UDP-N-acetyl-alpha-D-glucosamine. D105 contributes to the Mg(2+) binding site. UDP-N-acetyl-alpha-D-glucosamine contacts are provided by G142, E157, N172, and N230. N230 contributes to the Mg(2+) binding site. Residues 233 to 253 (VQLAEAGRIIRVRINKALMVA) are linker. Positions 254 to 457 (GTTIIDPETT…NKEGWKLKNK (204 aa)) are N-acetyltransferase. Residues R336 and K354 each coordinate UDP-N-acetyl-alpha-D-glucosamine. The Proton acceptor role is filled by H366. The UDP-N-acetyl-alpha-D-glucosamine site is built by Y369 and N380. Residues 389-390 (NY), S408, A426, and R443 each bind acetyl-CoA.

In the N-terminal section; belongs to the N-acetylglucosamine-1-phosphate uridyltransferase family. The protein in the C-terminal section; belongs to the transferase hexapeptide repeat family. As to quaternary structure, homotrimer. It depends on Mg(2+) as a cofactor.

The protein localises to the cytoplasm. The catalysed reaction is alpha-D-glucosamine 1-phosphate + acetyl-CoA = N-acetyl-alpha-D-glucosamine 1-phosphate + CoA + H(+). The enzyme catalyses N-acetyl-alpha-D-glucosamine 1-phosphate + UTP + H(+) = UDP-N-acetyl-alpha-D-glucosamine + diphosphate. It functions in the pathway nucleotide-sugar biosynthesis; UDP-N-acetyl-alpha-D-glucosamine biosynthesis; N-acetyl-alpha-D-glucosamine 1-phosphate from alpha-D-glucosamine 6-phosphate (route II): step 2/2. It participates in nucleotide-sugar biosynthesis; UDP-N-acetyl-alpha-D-glucosamine biosynthesis; UDP-N-acetyl-alpha-D-glucosamine from N-acetyl-alpha-D-glucosamine 1-phosphate: step 1/1. Its pathway is bacterial outer membrane biogenesis; LPS lipid A biosynthesis. Catalyzes the last two sequential reactions in the de novo biosynthetic pathway for UDP-N-acetylglucosamine (UDP-GlcNAc). The C-terminal domain catalyzes the transfer of acetyl group from acetyl coenzyme A to glucosamine-1-phosphate (GlcN-1-P) to produce N-acetylglucosamine-1-phosphate (GlcNAc-1-P), which is converted into UDP-GlcNAc by the transfer of uridine 5-monophosphate (from uridine 5-triphosphate), a reaction catalyzed by the N-terminal domain. The protein is Bifunctional protein GlmU of Geotalea daltonii (strain DSM 22248 / JCM 15807 / FRC-32) (Geobacter daltonii).